The following is a 122-amino-acid chain: Large ribosomal subunit protein uL14 (122 aa).

It belongs to the universal ribosomal protein uL14 family. In terms of assembly, part of the 50S ribosomal subunit. Forms a cluster with proteins L3 and L19. In the 70S ribosome, L14 and L19 interact and together make contacts with the 16S rRNA in bridges B5 and B8.

Binds to 23S rRNA. Forms part of two intersubunit bridges in the 70S ribosome. The chain is Large ribosomal subunit protein uL14 from Mycobacterium sp. (strain KMS).